Here is a 567-residue protein sequence, read N- to C-terminus: Asparagine--tRNA ligase, chloroplastic/mitochondrial (567 aa).

The segment at residues 113-191 (NIMGWVRTLR…VELKVEKIIV (79 aa)) is a DNA-binding region (OB).

Belongs to the class-II aminoacyl-tRNA synthetase family.

The protein localises to the plastid. Its subcellular location is the chloroplast. It localises to the mitochondrion. It catalyses the reaction tRNA(Asn) + L-asparagine + ATP = L-asparaginyl-tRNA(Asn) + AMP + diphosphate + H(+). This chain is Asparagine--tRNA ligase, chloroplastic/mitochondrial, found in Arabidopsis thaliana (Mouse-ear cress).